Reading from the N-terminus, the 137-residue chain is uncharacterized protein (137 aa).

Residues 75 to 91 (MFLDAMVILAVASGVSL) traverse the membrane as a helical segment. The disordered stretch occupies residues 93-116 (PQLPGRRSHNASTPGAKKPGKDHG).

It localises to the membrane. This is an uncharacterized protein from Saccharomyces cerevisiae (strain ATCC 204508 / S288c) (Baker's yeast).